The following is a 474-amino-acid chain: Probable CAAX prenyl protease 1 (474 aa).

Helical transmembrane passes span 103-123 (SWFS…IIKY), 196-216 (IFVI…SVVV), and 230-250 (FIMY…TIAP). His332 is a binding site for Zn(2+). The active site involves Glu333. A Zn(2+)-binding site is contributed by His336. Helical transmembrane passes span 344 to 364 (INTI…AAFI) and 381 to 401 (VIVG…ILTF). Glu411 is a Zn(2+) binding site. Residue Asp415 is the Proton donor of the active site.

Belongs to the peptidase M48A family. It depends on Zn(2+) as a cofactor.

It is found in the endoplasmic reticulum membrane. It carries out the reaction Hydrolyzes the peptide bond -P2-(S-farnesyl or geranylgeranyl)C-P1'-P2'-P3'-COOH where P1' and P2' are amino acids with aliphatic side chains and P3' is any C-terminal residue.. Its function is as follows. Proteolytically removes the C-terminal three residues of farnesylated proteins. The polypeptide is Probable CAAX prenyl protease 1 (Schizosaccharomyces pombe (strain 972 / ATCC 24843) (Fission yeast)).